Here is a 205-residue protein sequence, read N- to C-terminus: Ephrin-A1 (205 aa).

The N-terminal stretch at methionine 1–alanine 18 is a signal peptide. In terms of domain architecture, Ephrin RBD spans asparagine 19–isoleucine 151. N-linked (GlcNAc...) asparagine glycosylation is present at asparagine 26. 2 disulfides stabilise this stretch: cysteine 51–cysteine 92 and cysteine 80–cysteine 140. Residue serine 182 is the site of GPI-anchor amidated serine attachment. The propeptide at alanine 183–proline 205 is removed in mature form.

Belongs to the ephrin family. In terms of assembly, monomer. Homodimer. Forms heterodimers with EPHA2. Binds to the receptor tyrosine kinases EPHA2, EPHA3, EPHA4, EPHA5, EPHA6 and EPHA7. Also binds with low affinity to EPHA1. In terms of processing, undergoes proteolysis by a metalloprotease to give rise to a soluble monomeric form. Post-translationally, N-Glycosylation is required for binding to EPHA2 receptor and inducing its internalization.

It is found in the cell membrane. The protein localises to the secreted. Cell surface GPI-bound ligand for Eph receptors, a family of receptor tyrosine kinases which are crucial for migration, repulsion and adhesion during neuronal, vascular and epithelial development. Binds promiscuously Eph receptors residing on adjacent cells, leading to contact-dependent bidirectional signaling into neighboring cells. Plays an important role in angiogenesis and tumor neovascularization. The recruitment of VAV2, VAV3 and PI3-kinase p85 subunit by phosphorylated EPHA2 is critical for EFNA1-induced RAC1 GTPase activation and vascular endothelial cell migration and assembly. Exerts anti-oncogenic effects in tumor cells through activation and down-regulation of EPHA2. Activates EPHA2 by inducing tyrosine phosphorylation which leads to its internalization and degradation. Acts as a negative regulator in the tumorigenesis of gliomas by down-regulating EPHA2 and FAK. Can evoke collapse of embryonic neuronal growth cone and regulates dendritic spine morphogenesis. The sequence is that of Ephrin-A1 (EFNA1) from Bos taurus (Bovine).